The following is a 345-amino-acid chain: Anthranilate phosphoribosyltransferase (345 aa).

5-phospho-alpha-D-ribose 1-diphosphate contacts are provided by residues Gly79, 82–83, Thr87, 89–92, 106–114, and Ser118; these read GD, NVST, and KHGNRAVSG. An anthranilate-binding site is contributed by Gly79. Residue Ser91 participates in Mg(2+) binding. Asn109 is a binding site for anthranilate. Arg164 contacts anthranilate. Asp223 and Glu224 together coordinate Mg(2+).

This sequence belongs to the anthranilate phosphoribosyltransferase family. In terms of assembly, homodimer. Requires Mg(2+) as cofactor.

It carries out the reaction N-(5-phospho-beta-D-ribosyl)anthranilate + diphosphate = 5-phospho-alpha-D-ribose 1-diphosphate + anthranilate. It functions in the pathway amino-acid biosynthesis; L-tryptophan biosynthesis; L-tryptophan from chorismate: step 2/5. In terms of biological role, catalyzes the transfer of the phosphoribosyl group of 5-phosphorylribose-1-pyrophosphate (PRPP) to anthranilate to yield N-(5'-phosphoribosyl)-anthranilate (PRA). The sequence is that of Anthranilate phosphoribosyltransferase from Sulfurisphaera tokodaii (strain DSM 16993 / JCM 10545 / NBRC 100140 / 7) (Sulfolobus tokodaii).